Here is a 498-residue protein sequence, read N- to C-terminus: METLLKPFPSPLLSIPTPNMYSFKHNSTFPNPTKQKDSRKFHYRNKSSTHFCSFLDLAPTSKPESLDVNISWVDTDLDRAEFDVIIIGTGPAGLRLAEQVSKYGIKVCCVDPSPLSMWPNNYGVWVDEFEKLGLEDCLDHKWPVSCVHISDHKTKYLDRPYGRVSRKKLKLKLLNSCVENRVKFYKAKVLKVKHEEFESSIVCDDGRKISGSLIVDASGYASDFIEYDKPRNHGYQVAHGILAEVDNHPFDLDKMMLMDWRDSHLGNEPYLRVKNTKEPTFLYAMPFDRNLVFLEETSLVSRPMLSYMEVKRRMVARLRHLGIKVRSVLEEEKCVITMGGPLPRIPQNVMAIGGTSGIVHPSSGYMVARSMALAPVLAEAIVESLGSTRMIRGSQLYHRVWNGLWPSDRRRVRECYCFGMETLLKLDLEGTRRLFDAFFDVDPKYWHGFLSSRLSVKELAVLSLYLFGHASNLARLDIVTKCTVPLVKLLGNLAIESL.

Residues 1-52 (METLLKPFPSPLLSIPTPNMYSFKHNSTFPNPTKQKDSRKFHYRNKSSTHFC) constitute a chromoplast transit peptide. 84–112 (VIIIGTGPAGLRLAEQVSKYGIKVCCVDP) lines the NAD(+) pocket. The short motif at 293–297 (FLEET) is the FLEET motif element.

Belongs to the lycopene cyclase family. In terms of assembly, monomer. Requires FAD as cofactor. NADPH serves as cofactor.

The protein localises to the plastid. The protein resides in the chromoplast. The enzyme catalyses all-trans-violaxanthin = all-trans-capsorubin. It carries out the reaction all-trans-antheraxanthin = all-trans-capsanthin. It catalyses the reaction all-trans-violaxanthin = (5R,6S)-5,6-epoxi-capsanthin. The catalysed reaction is (5R,6S)-5,6-epoxi-capsanthin = all-trans-capsorubin. The protein operates within carotenoid biosynthesis; capsanthin biosynthesis; capsanthin from antheraxanthin: step 1/1. Its pathway is carotenoid biosynthesis; capsorubin biosynthesis; capsorubin from violaxanthin: step 1/1. Catalyzes the conversion of the ubiquitous 5,6-epoxycarotenoids, antheraxanthin and violaxanthin, into capsanthin and capsorubin, respectively. The sequence is that of Capsanthin/capsorubin synthase, chromoplastic from Capsicum annuum (Capsicum pepper).